A 542-amino-acid polypeptide reads, in one-letter code: Serine/threonine-protein phosphatase 2A regulatory subunit pptr-1 (542 aa).

Disordered stretches follow at residues 1–28 (MHGS…TGGQ) and 500–542 (DYLK…PAKK). The span at 528–542 (KKSSTGSETTTPAKK) shows a compositional bias: polar residues.

This sequence belongs to the phosphatase 2A regulatory subunit B56 family. Part of a complex consisting of a common heterodimeric core enzyme, composed of catalytic subunit let-92 and constant regulatory subunit paa-1, that associates with a variety of regulatory subunits which confer distinct properties to the holoenzyme. Interacts with akt-1 but not akt-2. Interacts with sgk-1. Interacts with P granule components meg-1, meg-3 and meg-4. In terms of tissue distribution, expressed in pharynx, vulva and spermatheca.

Its subcellular location is the cytoplasm. Functionally, probable regulatory subunit of serine/threonine-protein phosphatase let-92 which negatively regulates the insulin receptor signaling cascade composed of daf-2, age-1, akt-1, akt-2 and sgk-1 by promoting the dephosphorylation of akt-1 on 'Thr-350'. Negatively regulates several functions controlled by the insulin pathway including dauer formation, lifespan, fat storage and stress resistance. Plays a role in the asymmetric segregation of the P granule components during embryonic cell divisions but does not play an essential role in specifying germ cell fate. Within a PP2A phosphatase complex, acts redundantly with pptr-2, to dephosphorylate P granule components including meg-1 and meg-3 to promote the assembly and accumulation of zygotic P granules in the posterior cytoplasm during zygote polarization, and thus maintain P granule distribution and segregation in early stage embryos following meiosis. In adults, required to promote germ cell proliferation and differentiation when exposed to thermic stress. This chain is Serine/threonine-protein phosphatase 2A regulatory subunit pptr-1, found in Caenorhabditis elegans.